A 476-amino-acid polypeptide reads, in one-letter code: Aspartyl/glutamyl-tRNA(Asn/Gln) amidotransferase subunit B (476 aa).

Belongs to the GatB/GatE family. GatB subfamily. As to quaternary structure, heterotrimer of A, B and C subunits.

It catalyses the reaction L-glutamyl-tRNA(Gln) + L-glutamine + ATP + H2O = L-glutaminyl-tRNA(Gln) + L-glutamate + ADP + phosphate + H(+). The enzyme catalyses L-aspartyl-tRNA(Asn) + L-glutamine + ATP + H2O = L-asparaginyl-tRNA(Asn) + L-glutamate + ADP + phosphate + 2 H(+). Allows the formation of correctly charged Asn-tRNA(Asn) or Gln-tRNA(Gln) through the transamidation of misacylated Asp-tRNA(Asn) or Glu-tRNA(Gln) in organisms which lack either or both of asparaginyl-tRNA or glutaminyl-tRNA synthetases. The reaction takes place in the presence of glutamine and ATP through an activated phospho-Asp-tRNA(Asn) or phospho-Glu-tRNA(Gln). This Oceanobacillus iheyensis (strain DSM 14371 / CIP 107618 / JCM 11309 / KCTC 3954 / HTE831) protein is Aspartyl/glutamyl-tRNA(Asn/Gln) amidotransferase subunit B.